The following is a 497-amino-acid chain: Lysine--tRNA ligase (497 aa).

Positions 406 and 413 each coordinate Mg(2+).

This sequence belongs to the class-II aminoacyl-tRNA synthetase family. Homodimer. Mg(2+) is required as a cofactor.

The protein localises to the cytoplasm. It carries out the reaction tRNA(Lys) + L-lysine + ATP = L-lysyl-tRNA(Lys) + AMP + diphosphate. This chain is Lysine--tRNA ligase, found in Rhizobium leguminosarum bv. trifolii (strain WSM2304).